Here is a 97-residue protein sequence, read N- to C-terminus: Integration host factor subunit alpha (97 aa).

A disordered region spans residues 49-71; sequence FGNFDLRDKNQRPGRNPKTGEDI.

Belongs to the bacterial histone-like protein family. Heterodimer of an alpha and a beta chain.

Functionally, this protein is one of the two subunits of integration host factor, a specific DNA-binding protein that functions in genetic recombination as well as in transcriptional and translational control. The sequence is that of Integration host factor subunit alpha from Shewanella woodyi (strain ATCC 51908 / MS32).